A 1101-amino-acid polypeptide reads, in one-letter code: Translation initiation factor IF-2 (1101 aa).

2 disordered regions span residues 81–437 and 452–509; these read QEIL…EDDF and SIST…QRAE. A compositionally biased stretch (polar residues) spans 93-108; the sequence is PFSSTDAPVGSGQSSP. The span at 110–124 shows a compositional bias: pro residues; it reads IEPPRPPMKPQPPSP. 2 stretches are compositionally biased toward polar residues: residues 128–149 and 157–184; these read EVTS…GSSS and SPMS…QLKY. Residues 185-196 show a composition bias toward low complexity; sequence NQEQSNQLEQES. Polar residues predominate over residues 197 to 206; it reads AISSELSEVN. Composition is skewed to basic and acidic residues over residues 228 to 237, 248 to 288, and 295 to 340; these read SKEKEAKSNE, KENK…DKKS, and VKRE…ELKR. Residues 361–378 show a composition bias toward acidic residues; sequence EPEDVEDTAEDLLEEDPL. 2 stretches are compositionally biased toward basic residues: residues 385–397 and 414–428; these read PKLK…KVGK and KAGK…KRRQ. Residues 484–506 show a composition bias toward basic and acidic residues; sequence EPGRGKSAERERSERKDRKEQPQ. Positions 592–765 constitute a tr-type G domain; sequence RRPPVVTIMG…LLVAEVGELS (174 aa). Positions 601 to 608 are G1; that stretch reads GHVDHGKT. Residue 601-608 participates in GTP binding; the sequence is GHVDHGKT. Positions 626 to 630 are G2; sequence GITQH. The tract at residues 651-654 is G3; the sequence is DTPG. Residues 651–655 and 705–708 each bind GTP; these read DTPGH and NKID. Positions 705–708 are G4; that stretch reads NKID. The tract at residues 741–743 is G5; the sequence is SAL.

The protein belongs to the TRAFAC class translation factor GTPase superfamily. Classic translation factor GTPase family. IF-2 subfamily.

It is found in the cytoplasm. Functionally, one of the essential components for the initiation of protein synthesis. Protects formylmethionyl-tRNA from spontaneous hydrolysis and promotes its binding to the 30S ribosomal subunits. Also involved in the hydrolysis of GTP during the formation of the 70S ribosomal complex. The protein is Translation initiation factor IF-2 of Gloeothece citriformis (strain PCC 7424) (Cyanothece sp. (strain PCC 7424)).